The sequence spans 205 residues: Recombination protein RecR (205 aa).

A C4-type zinc finger spans residues 59-74; it reads CARCNTFCEGGLCDIC. A Toprim domain is found at 82 to 177; sequence RRLMVVHMPA…KVSRLSQGIP (96 aa).

The protein belongs to the RecR family.

May play a role in DNA repair. It seems to be involved in an RecBC-independent recombinational process of DNA repair. It may act with RecF and RecO. This Neisseria gonorrhoeae (strain ATCC 700825 / FA 1090) protein is Recombination protein RecR.